We begin with the raw amino-acid sequence, 204 residues long: LexA repressor (204 aa).

A DNA-binding region (H-T-H motif) is located at residues 30–50; the sequence is IREICQGVGLSSPSTVHHHLK. Residues Ser-125 and Lys-162 each act as for autocatalytic cleavage activity in the active site.

Belongs to the peptidase S24 family. Homodimer.

The catalysed reaction is Hydrolysis of Ala-|-Gly bond in repressor LexA.. In terms of biological role, represses a number of genes involved in the response to DNA damage (SOS response), including recA and lexA. In the presence of single-stranded DNA, RecA interacts with LexA causing an autocatalytic cleavage which disrupts the DNA-binding part of LexA, leading to derepression of the SOS regulon and eventually DNA repair. The protein is LexA repressor of Carboxydothermus hydrogenoformans (strain ATCC BAA-161 / DSM 6008 / Z-2901).